Here is an 81-residue protein sequence, read N- to C-terminus: Delta-conotoxin-like Ac6.3 (81 aa).

The signal sequence occupies residues 1 to 22 (MKLTCVMIVAVLFLTAWTFVTA). A propeptide spanning residues 23–51 (DDSRNGLENLSPKARHEMKNPEASKSNKR) is cleaved from the precursor. 3 disulfides stabilise this stretch: Cys54–Cys69, Cys61–Cys73, and Cys68–Cys78.

Belongs to the conotoxin O1 superfamily. As to expression, expressed by the venom duct.

It localises to the secreted. Delta-conotoxins bind to site 6 of voltage-gated sodium channels (Nav) and inhibit the inactivation process. The chain is Delta-conotoxin-like Ac6.3 from Conus achatinus (Little frog cone).